Consider the following 222-residue polypeptide: Probable transcriptional regulator ycf29 (222 aa).

The 117-residue stretch at 4 to 120 folds into the Response regulatory domain; that stretch reads KLMLVENDIV…ELLSIINNLI (117 aa). Asp53 is subject to 4-aspartylphosphate. In terms of domain architecture, HTH luxR-type spans 139-204; sequence QLNHKIRLTP…LLVKYSINNN (66 aa). Residues 163 to 182 constitute a DNA-binding region (H-T-H motif); sequence NKEISTILNTSVRNVEKYVS.

The protein localises to the plastid. Its subcellular location is the chloroplast. This chain is Probable transcriptional regulator ycf29 (ycf29), found in Pyropia yezoensis (Susabi-nori).